The primary structure comprises 417 residues: D-galactonate dehydratase family member RspA (417 aa).

Positions 43 and 127 each coordinate substrate. The active-site Proton donor/acceptor is tyrosine 158. Aspartate 223 is a binding site for Mg(2+). Histidine 225 functions as the Proton donor/acceptor in the catalytic mechanism. Residues glutamate 249 and glutamate 275 each coordinate Mg(2+). Substrate is bound by residues glutamate 275, arginine 296, histidine 325, aspartate 329, and glutamate 352.

The protein belongs to the mandelate racemase/muconate lactonizing enzyme family. GalD subfamily. Mg(2+) is required as a cofactor.

It catalyses the reaction D-gluconate = 2-dehydro-3-deoxy-D-gluconate + H2O. Its function is as follows. Has low D-gluconate dehydratase activity (in vitro), suggesting that it has no significant role in D-gluconate degradation in vivo. Has no detectable activity with a panel of 70 other acid sugars (in vitro). In Pantoea ananatis (strain LMG 20103), this protein is D-galactonate dehydratase family member RspA (rspA).